A 612-amino-acid chain; its full sequence is Heparan-sulfate 6-O-sulfotransferase 2 (612 aa).

Residues 1–4 (MALP) are Cytoplasmic-facing. A helical; Signal-anchor for type II membrane protein transmembrane segment spans residues 5 to 27 (AFAARALGPPLQPEQGAPARTTC). A disordered region spans residues 9 to 52 (RALGPPLQPEQGAPARTTCPRRHSRVEAELAASRPGSVAASVRA). Residues 28 to 612 (PRRHSRVEAE…DYIGSVETWR (585 aa)) lie on the Lumenal side of the membrane. Asn-209 carries N-linked (GlcNAc...) asparagine glycosylation. Residue 233-241 (HIQKTGGTT) participates in 3'-phosphoadenylyl sulfate binding. Residues 263-264 (KK), Arg-280, Trp-285, and His-290 each bind substrate. His-290 acts as the Proton acceptor in catalysis. 3'-phosphoadenylyl sulfate contacts are provided by Arg-325 and Ser-333. Substrate is bound by residues His-337 and Trp-344. N-linked (GlcNAc...) asparagine glycosylation is present at Asn-404. A 3'-phosphoadenylyl sulfate-binding site is contributed by 457-459 (TQY). The N-linked (GlcNAc...) asparagine glycan is linked to Asn-460. Residue 463-464 (RA) coordinates 3'-phosphoadenylyl sulfate. The disordered stretch occupies residues 529 to 612 (HFQSQSQGQS…DYIGSVETWR (84 aa)). A compositionally biased stretch (low complexity) spans 531–564 (QSQSQGQSQSQSPGQNLSQNPNPNPNQNLTQNLS). N-linked (GlcNAc...) asparagine glycans are attached at residues Asn-546, Asn-558, Asn-562, Asn-574, and Asn-599. Residues 565-577 (HNLTPSSNPNSTQ) show a composition bias toward polar residues.

The protein belongs to the sulfotransferase 6 family.

The protein resides in the membrane. It carries out the reaction alpha-D-glucosaminyl-[heparan sulfate](n) + 3'-phosphoadenylyl sulfate = 6-sulfo-alpha-D-glucosaminyl-[heparan sulfate](n) + adenosine 3',5'-bisphosphate + H(+). 6-O-sulfation enzyme which catalyzes the transfer of sulfate from 3'-phosphoadenosine 5'-phosphosulfate (PAPS) to position 6 of the N-sulfoglucosamine residue (GlcNS) of heparan sulfate. This is Heparan-sulfate 6-O-sulfotransferase 2 (Hs6st2) from Mus musculus (Mouse).